The primary structure comprises 256 residues: MKAELLLPLLGLQALLGAGTYFQTVTGFGLGMIVMGVTSGLGLAPVATVAAVVSLVTLANSACALPGKLQHIDWRAVAAAAIGILPSVVVGVLVLEYLSSSAATLLQLLLGAVILYGGLSAALKPAPLAQRSGDGTFFVSGVFGGLLSGMFGVSGPPLIFQFYRQPMKPVEIRCALILVFTVTSTVRTLFSAWQGQLDAAVCVQAAIAVPVVVIATLLGRRFPPPFSPATTRRVAFGVLIGIGASLMLPAISAWVL.

8 helical membrane-spanning segments follow: residues 5–25 (LLLP…FQTV), 33–53 (IVMG…AAVV), 76–96 (AVAA…LVLE), 103–123 (ATLL…SAAL), 142–162 (VFGG…IFQF), 172–190 (IRCA…RTLF), 199–219 (AAVC…TLLG), and 236–256 (FGVL…AWVL).

This sequence belongs to the 4-toluene sulfonate uptake permease (TSUP) (TC 2.A.102) family.

It localises to the cell inner membrane. Its function is as follows. Could be a sulfite/organosulfonate exporter with a wide substrate range, including 3-sulfolactate and 3-sulfopyruvate. This Cupriavidus necator (strain ATCC 17699 / DSM 428 / KCTC 22496 / NCIMB 10442 / H16 / Stanier 337) (Ralstonia eutropha) protein is Probable sulfite/organosulfonate exporter TauE.